A 394-amino-acid polypeptide reads, in one-letter code: Elongation factor Tu (394 aa).

The 195-residue stretch at 10 to 204 (KPHVNVGTIG…ALDSYIPTPE (195 aa)) folds into the tr-type G domain. A G1 region spans residues 19–26 (GHVDHGKT). 19-26 (GHVDHGKT) is a binding site for GTP. Thr26 is a Mg(2+) binding site. The tract at residues 60-64 (GITIN) is G2. The segment at 81–84 (DCPG) is G3. Residues 81 to 85 (DCPGH) and 136 to 139 (NKCD) each bind GTP. Positions 136–139 (NKCD) are G4. Residues 174–176 (SAL) form a G5 region.

The protein belongs to the TRAFAC class translation factor GTPase superfamily. Classic translation factor GTPase family. EF-Tu/EF-1A subfamily. As to quaternary structure, monomer.

The protein resides in the cytoplasm. It carries out the reaction GTP + H2O = GDP + phosphate + H(+). In terms of biological role, GTP hydrolase that promotes the GTP-dependent binding of aminoacyl-tRNA to the A-site of ribosomes during protein biosynthesis. This Neisseria meningitidis serogroup A / serotype 4A (strain DSM 15465 / Z2491) protein is Elongation factor Tu.